The following is a 547-amino-acid chain: MESELYECDVLIIGSGGAGCRAAIEVSEHKLTPIIVSKGLSFKSGCTGMAEGGYNAAFACVDPEDSPDVHFEDTMRGGGFINDPRLVRILVDEAPDRLRDLEEYGALFDRQESGLLDQRPFGGQTYRRTCYHGDRTGHEMITALKEEVIRRDIETIDEVMITSLLVEDGSVLGAMGVSIMNSEPVAFRASSTILASGGAGHIYPVTSNTMQKGGDGFAIAWKAGADLIDMEQVQFHPTGMVYPESRRGVLVTEAVRGEGGILLNSEGERFMGRYDPRGELATRDVVARAIYTEIMEGRGTENGGVYLDVSHLPDEVIEEKLETMLLQFLDVGVDIRSEPMEVAPTAHHFMGGVRIDEWGRTNLKNLFAAGEVSGGVHGANRLGGNALADTQVFGRRAGISAAKNAMSSSRRHVRSLIEEEEQRIKDMVRDGSIRPAEIRDELHEAMWSDVAIVRSRRSLESAMSRISTLMDKLGDLDVPETGGFNSNLLEALELENMLITASLVTRSALIREESRGSHYREDFPETRPEWKRSILLNRKMEPQFIGR.

Belongs to the FAD-dependent oxidoreductase 2 family. In terms of assembly, subunit A of the heterodimeric fumarate reductase of methanogenic Archaea, composed of subunits A (TfrA) and B (TfrB). An oxidized flavin is required as a cofactor.

The protein localises to the cytoplasm. The enzyme catalyses coenzyme B + coenzyme M + fumarate = coenzyme M-coenzyme B heterodisulfide + succinate. In terms of biological role, catalyzes the reduction of fumarate with reduced coenzyme M (CoM-S-H) and coenzyme B (CoB-S-H). In vitro, is able to reduces fumarate with reduced benzyl viologen, oxidize CoM-S-H and CoB-S-H to CoM-S-S-CoB with methylene blue, and reduce CoM-S-S-CoB with reduced benzyl viologen. The enzyme has specificity for the two thiol compounds as the CoB--CoM heterodisulfide reductase. The enzyme is very sensitive to oxygen. The polypeptide is Fumarate reductase (CoM/CoB) subunit A (Methanothermobacter marburgensis (strain ATCC BAA-927 / DSM 2133 / JCM 14651 / NBRC 100331 / OCM 82 / Marburg) (Methanobacterium thermoautotrophicum)).